Consider the following 225-residue polypeptide: Large ribosomal subunit protein uL4 (225 aa).

Residues 46 to 102 (KRQGTHATKGRGEVRGGGRKPFRQKGTGRARQGSIRAPHFTGGGTVHGPQPRDYSQR) are disordered. Basic residues predominate over residues 62–73 (GGRKPFRQKGTG).

The protein belongs to the universal ribosomal protein uL4 family. As to quaternary structure, part of the 50S ribosomal subunit.

One of the primary rRNA binding proteins, this protein initially binds near the 5'-end of the 23S rRNA. It is important during the early stages of 50S assembly. It makes multiple contacts with different domains of the 23S rRNA in the assembled 50S subunit and ribosome. Its function is as follows. Forms part of the polypeptide exit tunnel. In Corynebacterium urealyticum (strain ATCC 43042 / DSM 7109), this protein is Large ribosomal subunit protein uL4.